Reading from the N-terminus, the 187-residue chain is Ribosome-recycling factor (187 aa).

It belongs to the RRF family.

Its subcellular location is the cytoplasm. Its function is as follows. Responsible for the release of ribosomes from messenger RNA at the termination of protein biosynthesis. May increase the efficiency of translation by recycling ribosomes from one round of translation to another. The sequence is that of Ribosome-recycling factor from Parabacteroides distasonis (strain ATCC 8503 / DSM 20701 / CIP 104284 / JCM 5825 / NCTC 11152).